Reading from the N-terminus, the 146-residue chain is Sperm surface protein Sp17 (146 aa).

A compositionally biased stretch (basic and acidic residues) spans 76 to 88 (EHESEKCEAEEKS). The tract at residues 76–109 (EHESEKCEAEEKSQSVTEEETPVLTIDSEDDKDK) is disordered. The segment covering 92-108 (TEEETPVLTIDSEDDKD) has biased composition (acidic residues). The 30-residue stretch at 110–139 (EEMAALKIQAAFRGHLAREDVKKIRTNKAE) folds into the IQ domain.

As to quaternary structure, homodimer. May interact with ROPN1. The N-terminus is blocked. As to expression, testis- and sperm-specific.

It is found in the membrane. Its function is as follows. Sperm surface zona pellucida binding protein. Helps to bind spermatozoa to the zona pellucida with high affinity. Might function in binding zona pellucida and carbohydrates. The chain is Sperm surface protein Sp17 (SPA17) from Oryctolagus cuniculus (Rabbit).